Consider the following 1032-residue polypeptide: Kinesin heavy chain isoform 5A (1032 aa).

N-acetylalanine is present on alanine 2. A Kinesin motor domain is found at 9 to 327; that stretch reads SIKVLCRFRP…LMFGQRAKTI (319 aa). Residue 86–93 participates in ATP binding; that stretch reads GQTSSGKT. The microtubule-binding stretch occupies residues 174-315; it reads VSSPEEILDV…PSSYNDAETK (142 aa). Positions 271-361 are necessary for interaction with ZFYVE27; it reads EGTKSYVPYR…KTKAQKETIA (91 aa). The stretch at 331-906 forms a coiled coil; the sequence is ASVNLELTAE…VDRIKEAVRY (576 aa). The interval 353 to 1032 is interaction with BICD2; that stretch reads TKAQKETIAK…FPLHQETAAS (680 aa). Position 397 is a phosphothreonine (threonine 397). 2 disordered regions span residues 906-939 and 978-1010; these read YKSS…YGTR and SGAT…RSDL. Residues 907–1032 are globular; it reads KSSGKRGHSA…FPLHQETAAS (126 aa). Residues 978 to 989 show a composition bias toward low complexity; it reads SGATSSGGPLAS. Residues 991-1003 are compositionally biased toward polar residues; that stretch reads QKANMDNGNATDI.

Belongs to the TRAFAC class myosin-kinesin ATPase superfamily. Kinesin family. Kinesin subfamily. As to quaternary structure, oligomer composed of two heavy chains and two light chains. Interacts with GRIP1. Interacts with FMR1 (via C-terminus); this interaction is increased in a mGluR-dependent manner. Interacts with ZFYVE27. Interacts with VAPA, VAPB, SURF4, RAB11A (GDP-bound form), RAB11B (GDP-bound form) and RTN3 in a ZFYVE27-dependent manner. Interacts with BORCS5. Interacts with BICD2. Interacts with DTNB. Distributed throughout the CNS but is highly enriched in subsets of neurons.

The protein resides in the cytoplasm. It localises to the perinuclear region. Its subcellular location is the cytoskeleton. The protein localises to the perikaryon. It catalyses the reaction ATP + H2O + a kinesin associated with a microtubule at position (n) = ADP + phosphate a kinesin associated with a microtubule at position (n+1, toward the plus end).. Microtubule-dependent motor required for slow axonal transport of neurofilament proteins (NFH, NFM and NFL). Can induce formation of neurite-like membrane protrusions in non-neuronal cells in a ZFYVE27-dependent manner. The ZFYVE27-KIF5A complex contributes to the vesicular transport of VAPA, VAPB, SURF4, RAB11A, RAB11B and RTN3 proteins in neurons. Required for anterograde axonal transportation of MAPK8IP3/JIP3 which is essential for MAPK8IP3/JIP3 function in axon elongation. This chain is Kinesin heavy chain isoform 5A, found in Homo sapiens (Human).